Consider the following 314-residue polypeptide: 2,3-dihydroxyphenylpropionate/2,3-dihydroxicinnamic acid 1,2-dioxygenase (314 aa).

The active-site Proton donor is the His115. The Proton acceptor role is filled by His179.

Belongs to the LigB/MhpB extradiol dioxygenase family. Homotetramer. Fe(2+) is required as a cofactor.

It catalyses the reaction 3-(2,3-dihydroxyphenyl)propanoate + O2 = (2Z,4E)-2-hydroxy-6-oxonona-2,4-dienedioate + H(+). The enzyme catalyses (2E)-3-(2,3-dihydroxyphenyl)prop-2-enoate + O2 = (2Z,4E,7E)-2-hydroxy-6-oxonona-2,4,7-trienedioate + H(+). The protein operates within aromatic compound metabolism; 3-phenylpropanoate degradation. Its function is as follows. Catalyzes the non-heme iron(II)-dependent oxidative cleavage of 2,3-dihydroxyphenylpropionic acid and 2,3-dihydroxicinnamic acid into 2-hydroxy-6-ketononadienedioate and 2-hydroxy-6-ketononatrienedioate, respectively. The sequence is that of 2,3-dihydroxyphenylpropionate/2,3-dihydroxicinnamic acid 1,2-dioxygenase from Klebsiella pneumoniae (strain 342).